We begin with the raw amino-acid sequence, 110 residues long: Flagellar hook-basal body complex protein FliE (110 aa).

Belongs to the FliE family.

The protein resides in the bacterial flagellum basal body. The sequence is that of Flagellar hook-basal body complex protein FliE from Ralstonia nicotianae (strain ATCC BAA-1114 / GMI1000) (Ralstonia solanacearum).